Reading from the N-terminus, the 974-residue chain is Localization factor PodJL (974 aa).

Coiled-coil stretches lie at residues 81–163 (DEVG…EAAG), 218–320 (VARL…SAQA), and 375–469 (QAQA…LEAA). 2 disordered regions span residues 460-497 (SEAQ…SPFE) and 589-611 (AAAR…KKEK). Positions 589 to 598 (AAARAAAASE) are enriched in low complexity. The helical transmembrane segment at 642–662 (ALVVFAAAGALGAGVGGLLLL) threads the bilayer. 3 Sel1-like repeats span residues 757 to 793 (PAAQ…NGGD), 794 to 829 (PRAM…DMGL), and 830 to 865 (VDSQ…RAGD).

Post-translationally, two isoforms exist, the full-length translation product PodJL and a C-terminal truncated form PodJS. Both appear during a specific time period of the cell cycle to control different aspects of polar organelle development.

It localises to the membrane. Functionally, podJL provides the positional information for the localization of several polar organelles (pili, adhesive holdfast and chemotactic apparatus) by recruiting structural (CpaE) and regulatory (PleC) proteins to a specific cell pole. The protein is Localization factor PodJL (podJ) of Caulobacter vibrioides (strain ATCC 19089 / CIP 103742 / CB 15) (Caulobacter crescentus).